The following is a 478-amino-acid chain: Sulfate adenylyltransferase subunit 1 (478 aa).

One can recognise a tr-type G domain in the interval 28 to 244 (KTMLRFLTCG…LESVDVVNAR (217 aa)). The tract at residues 37–44 (GSVDDGKS) is G1. 37 to 44 (GSVDDGKS) contacts GTP. The segment at 95–99 (GITID) is G2. The interval 116-119 (DTPG) is G3. Residues 116–120 (DTPGH) and 171–174 (NKMD) each bind GTP. Positions 171-174 (NKMD) are G4. The G5 stretch occupies residues 209–211 (SAL).

The protein belongs to the TRAFAC class translation factor GTPase superfamily. Classic translation factor GTPase family. CysN/NodQ subfamily. As to quaternary structure, heterodimer composed of CysD, the smaller subunit, and CysN.

The enzyme catalyses sulfate + ATP + H(+) = adenosine 5'-phosphosulfate + diphosphate. It functions in the pathway sulfur metabolism; hydrogen sulfide biosynthesis; sulfite from sulfate: step 1/3. Its function is as follows. With CysD forms the ATP sulfurylase (ATPS) that catalyzes the adenylation of sulfate producing adenosine 5'-phosphosulfate (APS) and diphosphate, the first enzymatic step in sulfur assimilation pathway. APS synthesis involves the formation of a high-energy phosphoric-sulfuric acid anhydride bond driven by GTP hydrolysis by CysN coupled to ATP hydrolysis by CysD. The protein is Sulfate adenylyltransferase subunit 1 of Yersinia pseudotuberculosis serotype O:1b (strain IP 31758).